The chain runs to 220 residues: Lactate utilization protein C (220 aa).

The protein belongs to the LutC/YkgG family.

In terms of biological role, is involved in L-lactate degradation and allows cells to grow with lactate as the sole carbon source. This Anoxybacillus flavithermus (strain DSM 21510 / WK1) protein is Lactate utilization protein C.